Here is a 664-residue protein sequence, read N- to C-terminus: Phosphomethylpyrimidine synthase (664 aa).

Polar residues-rich tracts occupy residues 1-10 (MSTEPLSINP) and 17-27 (SATQEPSTSSK). Residues 1 to 37 (MSTEPLSINPLSAKPLSATQEPSTSSKPSRREQRAAA) form a disordered region. Substrate contacts are provided by residues N261, M290, Y319, H355, 375–377 (SRG), 416–419 (DGLR), and E455. H459 provides a ligand contact to Zn(2+). Y482 is a binding site for substrate. Zn(2+) is bound at residue H523. C603, C606, and C611 together coordinate [4Fe-4S] cluster.

This sequence belongs to the ThiC family. In terms of assembly, homodimer. [4Fe-4S] cluster is required as a cofactor.

It catalyses the reaction 5-amino-1-(5-phospho-beta-D-ribosyl)imidazole + S-adenosyl-L-methionine = 4-amino-2-methyl-5-(phosphooxymethyl)pyrimidine + CO + 5'-deoxyadenosine + formate + L-methionine + 3 H(+). It functions in the pathway cofactor biosynthesis; thiamine diphosphate biosynthesis. In terms of biological role, catalyzes the synthesis of the hydroxymethylpyrimidine phosphate (HMP-P) moiety of thiamine from aminoimidazole ribotide (AIR) in a radical S-adenosyl-L-methionine (SAM)-dependent reaction. The polypeptide is Phosphomethylpyrimidine synthase (Pectobacterium atrosepticum (strain SCRI 1043 / ATCC BAA-672) (Erwinia carotovora subsp. atroseptica)).